We begin with the raw amino-acid sequence, 397 residues long: CCA-adding enzyme (397 aa).

Positions 26 and 29 each coordinate ATP. CTP contacts are provided by Gly-26 and Arg-29. Mg(2+) is bound by residues Asp-39 and Asp-41. ATP contacts are provided by Arg-110, Asp-153, Arg-156, Arg-159, and Arg-162. Residues Arg-110, Asp-153, Arg-156, Arg-159, and Arg-162 each contribute to the CTP site.

The protein belongs to the tRNA nucleotidyltransferase/poly(A) polymerase family. Bacterial CCA-adding enzyme type 3 subfamily. As to quaternary structure, homodimer. Requires Mg(2+) as cofactor.

It carries out the reaction a tRNA precursor + 2 CTP + ATP = a tRNA with a 3' CCA end + 3 diphosphate. The enzyme catalyses a tRNA with a 3' CCA end + 2 CTP + ATP = a tRNA with a 3' CCACCA end + 3 diphosphate. Catalyzes the addition and repair of the essential 3'-terminal CCA sequence in tRNAs without using a nucleic acid template. Adds these three nucleotides in the order of C, C, and A to the tRNA nucleotide-73, using CTP and ATP as substrates and producing inorganic pyrophosphate. tRNA 3'-terminal CCA addition is required both for tRNA processing and repair. Also involved in tRNA surveillance by mediating tandem CCA addition to generate a CCACCA at the 3' terminus of unstable tRNAs. While stable tRNAs receive only 3'-terminal CCA, unstable tRNAs are marked with CCACCA and rapidly degraded. The protein is CCA-adding enzyme of Bacillus cytotoxicus (strain DSM 22905 / CIP 110041 / 391-98 / NVH 391-98).